A 311-amino-acid polypeptide reads, in one-letter code: HPr kinase/phosphorylase (311 aa).

Catalysis depends on residues H138 and K159. 153-160 (GDSGIGKS) provides a ligand contact to ATP. S160 provides a ligand contact to Mg(2+). The Proton acceptor; for phosphorylation activity. Proton donor; for dephosphorylation activity role is filled by D177. The important for the catalytic mechanism of both phosphorylation and dephosphorylation stretch occupies residues 201 to 210 (IEIRGVGIID). E202 contacts Mg(2+). The active site involves R243. An important for the catalytic mechanism of dephosphorylation region spans residues 264-269 (PVKTGR).

Belongs to the HPrK/P family. Homohexamer. Mg(2+) is required as a cofactor.

The catalysed reaction is [HPr protein]-L-serine + ATP = [HPr protein]-O-phospho-L-serine + ADP + H(+). It carries out the reaction [HPr protein]-O-phospho-L-serine + phosphate + H(+) = [HPr protein]-L-serine + diphosphate. Its function is as follows. Catalyzes the ATP- as well as the pyrophosphate-dependent phosphorylation of a specific serine residue in HPr, a phosphocarrier protein of the phosphoenolpyruvate-dependent sugar phosphotransferase system (PTS). HprK/P also catalyzes the pyrophosphate-producing, inorganic phosphate-dependent dephosphorylation (phosphorolysis) of seryl-phosphorylated HPr (P-Ser-HPr). The two antagonistic activities of HprK/P are regulated by several intracellular metabolites, which change their concentration in response to the absence or presence of rapidly metabolisable carbon sources (glucose, fructose, etc.) in the growth medium. Therefore, by controlling the phosphorylation state of HPr, HPrK/P is a sensor enzyme that plays a major role in the regulation of carbon metabolism and sugar transport: it mediates carbon catabolite repression (CCR), and regulates PTS-catalyzed carbohydrate uptake and inducer exclusion. This Streptococcus pneumoniae serotype 2 (strain D39 / NCTC 7466) protein is HPr kinase/phosphorylase.